Reading from the N-terminus, the 289-residue chain is MVDIIIAEHAGFCFGVKRAVKLAEESLKESQGKVYTLGPIIHNPQEVNRLKNLGVFPSQGEEFKEGDTVIIRSHGIPPEKEEALRKKGLKVIDATCPYVKAVHEAVCQLTREGYFVVLVGEKNHPEVIGTLGYLRACNGKGIVVETLEDIGEALKHERVGIVAQTTQNEEFFKEVVGEIALWVKEVKVINTICNATSLRQESVKKLAPEVDVMIIIGGKNSGNTRRLYYISKELNPNTYHIETAEELQPEWFRGVKRVGISAGASTPDWIIEQVKSRIQEICEGQLVSS.

C13 serves as a coordination point for [4Fe-4S] cluster. Positions 42 and 74 each coordinate (2E)-4-hydroxy-3-methylbut-2-enyl diphosphate. Residues H42 and H74 each coordinate dimethylallyl diphosphate. The isopentenyl diphosphate site is built by H42 and H74. Residue C96 participates in [4Fe-4S] cluster binding. Residue H124 coordinates (2E)-4-hydroxy-3-methylbut-2-enyl diphosphate. H124 lines the dimethylallyl diphosphate pocket. Residue H124 participates in isopentenyl diphosphate binding. The active-site Proton donor is the E126. Position 165 (T165) interacts with (2E)-4-hydroxy-3-methylbut-2-enyl diphosphate. C193 is a [4Fe-4S] cluster binding site. Residues S221, N223, and S265 each contribute to the (2E)-4-hydroxy-3-methylbut-2-enyl diphosphate site. Residues S221, N223, and S265 each contribute to the dimethylallyl diphosphate site. Positions 221, 223, and 265 each coordinate isopentenyl diphosphate.

It belongs to the IspH family. The cofactor is [4Fe-4S] cluster.

The enzyme catalyses isopentenyl diphosphate + 2 oxidized [2Fe-2S]-[ferredoxin] + H2O = (2E)-4-hydroxy-3-methylbut-2-enyl diphosphate + 2 reduced [2Fe-2S]-[ferredoxin] + 2 H(+). The catalysed reaction is dimethylallyl diphosphate + 2 oxidized [2Fe-2S]-[ferredoxin] + H2O = (2E)-4-hydroxy-3-methylbut-2-enyl diphosphate + 2 reduced [2Fe-2S]-[ferredoxin] + 2 H(+). Its pathway is isoprenoid biosynthesis; dimethylallyl diphosphate biosynthesis; dimethylallyl diphosphate from (2E)-4-hydroxy-3-methylbutenyl diphosphate: step 1/1. It participates in isoprenoid biosynthesis; isopentenyl diphosphate biosynthesis via DXP pathway; isopentenyl diphosphate from 1-deoxy-D-xylulose 5-phosphate: step 6/6. Highly sensitive to dioxygen. Catalyzes the conversion of 1-hydroxy-2-methyl-2-(E)-butenyl 4-diphosphate (HMBPP) into a mixture of isopentenyl diphosphate (IPP) and dimethylallyl diphosphate (DMAPP). Acts in the terminal step of the DOXP/MEP pathway for isoprenoid precursor biosynthesis. In Aquifex aeolicus (strain VF5), this protein is 4-hydroxy-3-methylbut-2-enyl diphosphate reductase.